Here is a 204-residue protein sequence, read N- to C-terminus: Histidine biosynthesis bifunctional protein HisIE (204 aa).

Positions 1-114 are phosphoribosyl-AMP cyclohydrolase; it reads MLTEQQINQL…FAPAASDWSF (114 aa). The tract at residues 115 to 204 is phosphoribosyl-ATP pyrophosphohydrolase; it reads LYQLEQLLAS…IGRLRERHEK (90 aa).

The protein in the N-terminal section; belongs to the PRA-CH family. This sequence in the C-terminal section; belongs to the PRA-PH family.

The protein resides in the cytoplasm. It catalyses the reaction 1-(5-phospho-beta-D-ribosyl)-ATP + H2O = 1-(5-phospho-beta-D-ribosyl)-5'-AMP + diphosphate + H(+). It carries out the reaction 1-(5-phospho-beta-D-ribosyl)-5'-AMP + H2O = 1-(5-phospho-beta-D-ribosyl)-5-[(5-phospho-beta-D-ribosylamino)methylideneamino]imidazole-4-carboxamide. The protein operates within amino-acid biosynthesis; L-histidine biosynthesis; L-histidine from 5-phospho-alpha-D-ribose 1-diphosphate: step 2/9. It functions in the pathway amino-acid biosynthesis; L-histidine biosynthesis; L-histidine from 5-phospho-alpha-D-ribose 1-diphosphate: step 3/9. In Yersinia pestis, this protein is Histidine biosynthesis bifunctional protein HisIE (hisI).